The primary structure comprises 345 residues: Trans-enoyl reductase tndF (345 aa).

Positions Met-1 to Lys-26 are disordered. NADP(+) is bound by residues Cys-44–Arg-49, Ser-168–Val-171, Ser-191–His-194, Tyr-209, and Leu-244–Asp-245.

The protein belongs to the zinc-containing alcohol dehydrogenase family.

It functions in the pathway secondary metabolite biosynthesis; terpenoid biosynthesis. Its function is as follows. Trans-enoyl reductase; part of the gene cluster that mediates the biosynthesis of talaronoid C, a fusicoccane diterpenoid with an unprecedented tricyclic 5/8/6 ring system. The first step in the pathway is performed by the fusicoccadiene synthase tndC that possesses both prenyl transferase and terpene cyclase activity, converting isopentenyl diphosphate and dimethylallyl diphosphate into geranylgeranyl diphosphate (GGDP) and further converting GGDP into talarodiene, a precursor for talaronoid C. The remaining enzymes from the cluster include the cytochrome P450 monooxygenase tndB, the aldehyde reductase tndE and the alcohol dehydrogenase tndF that are involved in the conversion of talarodiene into talaronoid C. This chain is Trans-enoyl reductase tndF, found in Aspergillus flavipes.